Reading from the N-terminus, the 439-residue chain is Xaa-Pro dipeptidase (439 aa).

The Mn(2+) site is built by Asp-244, Asp-255, His-335, Glu-380, and Glu-419.

This sequence belongs to the peptidase M24B family. Bacterial-type prolidase subfamily. Mn(2+) is required as a cofactor.

It catalyses the reaction Xaa-L-Pro dipeptide + H2O = an L-alpha-amino acid + L-proline. Splits dipeptides with a prolyl residue in the C-terminal position. This chain is Xaa-Pro dipeptidase, found in Shewanella oneidensis (strain ATCC 700550 / JCM 31522 / CIP 106686 / LMG 19005 / NCIMB 14063 / MR-1).